The sequence spans 240 residues: Insulin-like growth factor-binding protein 3 receptor (240 aa).

A signal peptide spans Met1 to Gly38. Over Gly39–Arg204 the chain is Extracellular. Residue Asn167 is glycosylated (N-linked (GlcNAc...) asparagine). The chain crosses the membrane as a helical span at residues Val205–Val225. Residues Cys226–Leu240 are Cytoplasmic-facing.

In terms of assembly, interacts with IGFBP3. Interacts with CASP8.

It localises to the cell membrane. Functionally, cell death receptor specific for IGFBP3, may mediate caspase-8-dependent apoptosis upon ligand binding. This Mus musculus (Mouse) protein is Insulin-like growth factor-binding protein 3 receptor (Tmem219).